We begin with the raw amino-acid sequence, 397 residues long: Purine nucleoside transport protein NupG (397 aa).

11 helical membrane-spanning segments follow: residues 1–21 (MYFLLNLVGLIVIMAVVFLCS), 32–52 (IITLIVLELLITWFMLGTKVG), 62–82 (FFTWLIACASDGIAFAFPSVM), 97–117 (IIFIVTFFDILTYFGILPWLI), 133–153 (LESFFSIQMMFLGNTEALAVI), 165–185 (LLTFGLMSMSSISGSIIGSYL), 187–207 (MVPATYVFTAIPLNCLNALII), 242–262 (MLVGMNMVIVILAMVIGYVAL), 282–302 (IFAYLFSPFAFLLGLPVHDAM), 335–355 (VAVATTFLTSFANFSTVGMIY), and 377–397 (LLVSGIAVSLLSAAIVGLFVW).

This sequence belongs to the concentrative nucleoside transporter (CNT) (TC 2.A.41) family.

Its subcellular location is the cell membrane. Its function is as follows. Involved in the uptake of the purine ribonucleosides inosine and guanosine. This Bacillus subtilis (strain 168) protein is Purine nucleoside transport protein NupG (nupG).